A 181-amino-acid polypeptide reads, in one-letter code: MSSMLVVARTYAQAIFDIAVEQKNINKWKSVLDLFSEISLNRLVQSLFFRCLEPKRLSDIFIAICEDYQKKQVDTFSKNIIYIMAENNRLLLLPIVFKEFTYLCSIYVHTVEIEIISAWPLKYNQLKKITDIMAKRLSKTVNPVHKVDKDILAGVIIRIGDTVIDGSIRGRIFRLNHVLQS.

It belongs to the ATPase delta chain family. In terms of assembly, F-type ATPases have 2 components, F(1) - the catalytic core - and F(0) - the membrane proton channel. F(1) has five subunits: alpha(3), beta(3), gamma(1), delta(1), epsilon(1). F(0) has three main subunits: a(1), b(2) and c(10-14). The alpha and beta chains form an alternating ring which encloses part of the gamma chain. F(1) is attached to F(0) by a central stalk formed by the gamma and epsilon chains, while a peripheral stalk is formed by the delta and b chains.

The protein localises to the cell inner membrane. Functionally, f(1)F(0) ATP synthase produces ATP from ADP in the presence of a proton or sodium gradient. F-type ATPases consist of two structural domains, F(1) containing the extramembraneous catalytic core and F(0) containing the membrane proton channel, linked together by a central stalk and a peripheral stalk. During catalysis, ATP synthesis in the catalytic domain of F(1) is coupled via a rotary mechanism of the central stalk subunits to proton translocation. Its function is as follows. This protein is part of the stalk that links CF(0) to CF(1). It either transmits conformational changes from CF(0) to CF(1) or is implicated in proton conduction. The polypeptide is ATP synthase subunit delta (Blochmanniella pennsylvanica (strain BPEN)).